Consider the following 366-residue polypeptide: Inactive protein RESTRICTED TEV MOVEMENT 2 (366 aa).

The sHSP domain maps to 14–121 (VQYEDFVPKS…LPETSRTEAA (108 aa)). An A-1 repeat occupies 129–133 (LEEKR). Residues 129–220 (LEEKRLLEES…LEERRLEERK (92 aa)) are 6 X 5 AA repeats A of L-E-E-[SKR]-[ERK]. An A-2 repeat occupies 135-139 (LEESR). An A-3 repeat occupies 156–160 (LEEKE). One copy of the B-1 repeat lies at 163 to 176 (IRKLQEEAKAKEEA). Residues 163-206 (IRKLQEEAKAKEEAEMRKLQEEAKANEEAAAKKLQEEIEAKEKL) are 3 X 14 AA repeats B of [IMA]-[RK]-K-L-Q-E-E-A-K-A-K-E-[EK]-[LA]. The B-2 repeat unit spans residues 178–191 (MRKLQEEAKANEEA). Residues 193–205 (AKKLQEEIEAKEK) form a B-3 repeat. Residues 206 to 210 (LEERK) form an A-4 repeat. An A-5 repeat occupies 211-215 (LEERR). One copy of the A-6 repeat lies at 216–220 (LEERK). A helical transmembrane segment spans residues 322-342 (LMMNVGVAALVIFALGAYVSY). Positions 345 to 366 (CSSSSSSSSSSPSSSSSSTKPE) are disordered. The span at 346–366 (SSSSSSSSSSPSSSSSSTKPE) shows a compositional bias: low complexity.

The protein belongs to the small heat shock protein (HSP20) family.

The protein localises to the cell membrane. Its function is as follows. Seems to not be involved in heat resistance. Unable to mediate restriction of long-distance movement of the pathogenic tobacco etch virus (TEV) without causing a hypersensitive response or inducing systemic acquired resistance. This Arabidopsis thaliana (Mouse-ear cress) protein is Inactive protein RESTRICTED TEV MOVEMENT 2 (RTM2).